The sequence spans 319 residues: MDHHHHIASRNSSTTSELPSFEPACHNGNGNGWIYDPNQVRYDQSSDQRLSKLTDLVGKHWSIAPPNNPDMNHNLHHHFDHDHSQNDDISMYRQALEVKNEEDLCYNNGSSGGGSLFHDPIESSRSFLDIRLSRPLTDINPSFKPCFKALNVSEFNKKEHQTASLAAVRLGTTNAGKKKRCEEISDEVSKKAKCSEGSTLSPEKELPKAKLRDKITTLQQIVSPFGKTDTASVLQEAITYINFYQEQVKLLSTPYMKNSSMKDPWGGWDREDHNKRGPKHLDLRSRGLCLVPISYTPIAYRDNSATDYWNPTYRGSLYR.

The disordered stretch occupies residues 1–23 (MDHHHHIASRNSSTTSELPSFEP). A compositionally biased stretch (polar residues) spans 9–18 (SRNSSTTSEL). The 50-residue stretch at 195-244 (SEGSTLSPEKELPKAKLRDKITTLQQIVSPFGKTDTASVLQEAITYINFY) folds into the bHLH domain.

As to quaternary structure, homodimer.

It localises to the nucleus. The protein is Transcription factor bHLH111 (BHLH111) of Arabidopsis thaliana (Mouse-ear cress).